The chain runs to 371 residues: Nicotinate-nucleotide pyrophosphorylase [carboxylating], chloroplastic (371 aa).

The transit peptide at 1–48 (MPAAAAAAAPPNPNVLQLAPRLRGLVSFPSSYSSSSPFSNRLRLRLPR) directs the protein to the chloroplast. Substrate is bound by residues R162, 193-195 (TRK), R217, K227, E260, D287, 319-321 (SGN), and 340-342 (SGA).

The protein belongs to the NadC/ModD family.

The protein localises to the plastid. Its subcellular location is the chloroplast. It catalyses the reaction nicotinate beta-D-ribonucleotide + CO2 + diphosphate = quinolinate + 5-phospho-alpha-D-ribose 1-diphosphate + 2 H(+). It functions in the pathway cofactor biosynthesis; NAD(+) biosynthesis; nicotinate D-ribonucleotide from quinolinate: step 1/1. Functionally, involved in the catabolism of quinolinic acid (QA). The chain is Nicotinate-nucleotide pyrophosphorylase [carboxylating], chloroplastic from Oryza sativa subsp. japonica (Rice).